The chain runs to 364 residues: Spermidine/putrescine import ATP-binding protein PotA (364 aa).

The ABC transporter domain maps to 6–236 (IEIRQIYKSY…PANLHVAMFI (231 aa)). 38–45 (GPSGCGKT) provides a ligand contact to ATP.

This sequence belongs to the ABC transporter superfamily. Spermidine/putrescine importer (TC 3.A.1.11.1) family. In terms of assembly, the complex is composed of two ATP-binding proteins (PotA), two transmembrane proteins (PotB and PotC) and a solute-binding protein (PotD).

It localises to the cell inner membrane. The enzyme catalyses ATP + H2O + polyamine-[polyamine-binding protein]Side 1 = ADP + phosphate + polyamineSide 2 + [polyamine-binding protein]Side 1.. Its function is as follows. Part of the ABC transporter complex PotABCD involved in spermidine/putrescine import. Responsible for energy coupling to the transport system. This is Spermidine/putrescine import ATP-binding protein PotA from Legionella pneumophila (strain Paris).